Reading from the N-terminus, the 825-residue chain is MAPLACDPTALDHAGATVVAAGESLGSVISTLTAALAGTSGMAGDDPVGAALGRRYDGAAAKLIQAMADTRNGLCSIGDGVRMSAHNYAVAEAMSDLAGRASALPAPQVTGPLTVGAPPSAVGHGSGAPAGWGWVAPSIGMIWPTGDSAKLRAAAAAWATAGANFMAAETAAGGGTMAAIGAQQIPEGAAINKALADASSATADVARQCQTIAAQLNSYAAKVDQVHAAILDLLSRICDPLTGIKEVWDLLTDEDEDEIKKIADDIRTVVDNFGREADTLGGQIEATVSAVAAATENMSHWAGKEWDHFLHGTPVGRALNQVGQAFKGVGEEGWGFLKGLYEVSPNRMLLDPVGYGKTMAGMVEGAGTLVGLGPDGVPGAFDAWKALGKDVTHWDEWGSNPAEALGKSTFDVATLALPGGPLSKLGKFGHSAADALKGLKKPPGVPKPPEVKPPAAPKAPDSGQPAPSGKPGPVAPSGKPAPGPADGPLPHSPTESKPPAGGTPPAAEPPKPTAAPHSGEPKPIATPPESVGKPVTPAPAEGAPAQPHEPVSARVPPTVPAADTPAPSAPAASMSAASGPPMPPTPSLPEPASLPSGPSGDLPAETPPTAGIPHSGEPSAPSSVPPHFPDTPTHGLGDGGAHGPPESDPKNANGHGPHDASLDSGSDHHLPLHPLDSDDLAALAHYTGPGYQELNFALREGALDVSQQARVDALQKALEKLPVYEGAVVRGTNLPADVLEQYRPGEVITEAAFTSTSTDHTVAQSSAFAGNTEFRIWSTTGRDVSSVSMYPDEKEILFPAGSKFYVVSKTVDPQTGRTIIEMIER.

The disordered stretch occupies residues 435–673; that stretch reads ALKGLKKPPG…SGSDHHLPLH (239 aa). 2 stretches are compositionally biased toward pro residues: residues 443–457 and 468–491; these read PGVP…PAAP and SGKP…PLPH. Residues 560-579 show a composition bias toward low complexity; it reads PAADTPAPSAPAASMSAASG. A compositionally biased stretch (pro residues) spans 580 to 589; the sequence is PPMPPTPSLP. Residues 590-599 show a composition bias toward low complexity; the sequence is EPASLPSGPS. Residues 650–825 enclose the TR mART core domain; that stretch reads KNANGHGPHD…GRTIIEMIER (176 aa). The segment covering 656–670 has biased composition (basic and acidic residues); sequence GPHDASLDSGSDHHL. NAD(+) is bound by residues 687–699, 730–733, and Glu750; these read TGPG…FALR and RGTN. Arg730 is a catalytic residue. Active-site residues include Ser755 and Glu795. An NAD(+)-binding site is contributed by Glu795.

The protein belongs to the Arg-specific ADP-ribosyltransferase family.

The protein localises to the secreted. The catalysed reaction is L-arginyl-[protein] + NAD(+) = N(omega)-(ADP-D-ribosyl)-L-arginyl-[protein] + nicotinamide + H(+). Functionally, a probable mono(ADP-ribosyl)transferase, it may ADP-ribosylate Arg in target protein(s). This Mycobacterium avium (strain 104) protein is Putative NAD(+)--arginine ADP-ribosyltransferase Mav.